Reading from the N-terminus, the 196-residue chain is Glycerol-3-phosphate acyltransferase (196 aa).

4 helical membrane passes run 4–24 (LTLL…AVVI), 80–100 (PFFL…PLYF), 114–134 (AMFP…LLVF), and 155–175 (AYWI…LILW).

This sequence belongs to the PlsY family. As to quaternary structure, probably interacts with PlsX.

The protein localises to the cell inner membrane. It catalyses the reaction an acyl phosphate + sn-glycerol 3-phosphate = a 1-acyl-sn-glycero-3-phosphate + phosphate. The protein operates within lipid metabolism; phospholipid metabolism. In terms of biological role, catalyzes the transfer of an acyl group from acyl-phosphate (acyl-PO(4)) to glycerol-3-phosphate (G3P) to form lysophosphatidic acid (LPA). This enzyme utilizes acyl-phosphate as fatty acyl donor, but not acyl-CoA or acyl-ACP. This is Glycerol-3-phosphate acyltransferase from Idiomarina loihiensis (strain ATCC BAA-735 / DSM 15497 / L2-TR).